Here is a 416-residue protein sequence, read N- to C-terminus: Probable intermembrane transport protein HI_1671 (416 aa).

Transmembrane regions (helical) follow at residues 62–82 (ILIL…LLGI), 107–127 (IFIC…MLWL), 138–158 (VLLF…LVAL), 172–192 (EINI…LLFI), 263–283 (LIAG…GIYL), 306–326 (FVAF…IFIM), 347–367 (LLHL…VLAL), and 377–397 (IINF…FCTM).

It belongs to the PqiA family.

It is found in the cell inner membrane. This is Probable intermembrane transport protein HI_1671 from Haemophilus influenzae (strain ATCC 51907 / DSM 11121 / KW20 / Rd).